The primary structure comprises 577 residues: Proline--tRNA ligase (577 aa).

The protein belongs to the class-II aminoacyl-tRNA synthetase family. ProS type 1 subfamily. In terms of assembly, homodimer.

It localises to the cytoplasm. It carries out the reaction tRNA(Pro) + L-proline + ATP = L-prolyl-tRNA(Pro) + AMP + diphosphate. Functionally, catalyzes the attachment of proline to tRNA(Pro) in a two-step reaction: proline is first activated by ATP to form Pro-AMP and then transferred to the acceptor end of tRNA(Pro). As ProRS can inadvertently accommodate and process non-cognate amino acids such as alanine and cysteine, to avoid such errors it has two additional distinct editing activities against alanine. One activity is designated as 'pretransfer' editing and involves the tRNA(Pro)-independent hydrolysis of activated Ala-AMP. The other activity is designated 'posttransfer' editing and involves deacylation of mischarged Ala-tRNA(Pro). The misacylated Cys-tRNA(Pro) is not edited by ProRS. The polypeptide is Proline--tRNA ligase (Limosilactobacillus reuteri (strain DSM 20016) (Lactobacillus reuteri)).